A 1643-amino-acid polypeptide reads, in one-letter code: Outer membrane protein B (1643 aa).

The propeptide occupies glycine 1329–serine 1352. An Autotransporter domain is found at glutamate 1355 to phenylalanine 1643.

It belongs to the rickettsiae OmpA/OmpB family.

It is found in the periplasm. Its subcellular location is the secreted. It localises to the cell surface. The protein resides in the cell outer membrane. In terms of biological role, the 120 kDa surface-exposed protein is a major structural protein which may play a role as a rickettsial virulence factor and/or immunogen during infection. The 32 kDa beta peptide may serve as a membrane anchor. It has been shown to adhere to biotinylated Vero cell proteins. The chain is Outer membrane protein B (ompB) from Rickettsia prowazekii (strain Madrid E).